Reading from the N-terminus, the 596-residue chain is Elongation factor 4 (596 aa).

The 182-residue stretch at 2–183 (ENIRNFCIIA…AIIQRIPPPK (182 aa)) folds into the tr-type G domain. GTP is bound by residues 14–19 (DHGKST) and 130–133 (NKID).

The protein belongs to the TRAFAC class translation factor GTPase superfamily. Classic translation factor GTPase family. LepA subfamily.

The protein localises to the cell inner membrane. The enzyme catalyses GTP + H2O = GDP + phosphate + H(+). Functionally, required for accurate and efficient protein synthesis under certain stress conditions. May act as a fidelity factor of the translation reaction, by catalyzing a one-codon backward translocation of tRNAs on improperly translocated ribosomes. Back-translocation proceeds from a post-translocation (POST) complex to a pre-translocation (PRE) complex, thus giving elongation factor G a second chance to translocate the tRNAs correctly. Binds to ribosomes in a GTP-dependent manner. This Cytophaga hutchinsonii (strain ATCC 33406 / DSM 1761 / CIP 103989 / NBRC 15051 / NCIMB 9469 / D465) protein is Elongation factor 4.